A 131-amino-acid chain; its full sequence is uncharacterized protein (131 aa).

The next 3 helical transmembrane spans lie at 13-35 (RFIKFVFPFPATGIYFHGYTFPI), 60-79 (LVALPILMLQPSMYVCTYVC), and 100-119 (LFEIVLYYLSVCTPYWWNIT).

The protein localises to the membrane. This is an uncharacterized protein from Saccharomyces cerevisiae (strain ATCC 204508 / S288c) (Baker's yeast).